Consider the following 442-residue polypeptide: Probable folate-biopterin transporter 7 (442 aa).

Transmembrane regions (helical) follow at residues 23–43, 64–82, 87–107, 114–134, 158–178, 184–204, 241–261, 270–290, 302–322, 335–355, 379–399, and 410–430; these read LGFG…ANFF, LPMV…VYFF, IPYI…IAFL, ILAL…VEVA, FVWM…GIAI, QSTF…TINI, IAWI…MFFY, ASLL…WGFA, KLLT…LLFV, VYVL…ILPF, IALA…FVGV, and GLAI…WIYD.

It belongs to the major facilitator superfamily. Folate-biopterin transporter (TC 2.A.71) family.

It localises to the membrane. Functionally, could mediate folate transport. This chain is Probable folate-biopterin transporter 7, found in Arabidopsis thaliana (Mouse-ear cress).